Reading from the N-terminus, the 700-residue chain is Elongation factor G (700 aa).

Residues 8-290 (ERYRNIGISA…AVVEYLPSPV (283 aa)) form the tr-type G domain. GTP contacts are provided by residues 17–24 (AHIDAGKT), 88–92 (DTPGH), and 142–145 (NKMD).

Belongs to the TRAFAC class translation factor GTPase superfamily. Classic translation factor GTPase family. EF-G/EF-2 subfamily.

The protein localises to the cytoplasm. Functionally, catalyzes the GTP-dependent ribosomal translocation step during translation elongation. During this step, the ribosome changes from the pre-translocational (PRE) to the post-translocational (POST) state as the newly formed A-site-bound peptidyl-tRNA and P-site-bound deacylated tRNA move to the P and E sites, respectively. Catalyzes the coordinated movement of the two tRNA molecules, the mRNA and conformational changes in the ribosome. The sequence is that of Elongation factor G from Mannheimia succiniciproducens (strain KCTC 0769BP / MBEL55E).